Reading from the N-terminus, the 273-residue chain is Probable nicotinate-nucleotide pyrophosphorylase [carboxylating] (273 aa).

Substrate-binding positions include R91, 124–126 (TRK), R148, K158, E188, D209, 235–237 (SGN), and 256–258 (VGA).

The protein belongs to the NadC/ModD family. As to quaternary structure, hexamer formed by 3 homodimers.

It carries out the reaction nicotinate beta-D-ribonucleotide + CO2 + diphosphate = quinolinate + 5-phospho-alpha-D-ribose 1-diphosphate + 2 H(+). Its pathway is cofactor biosynthesis; NAD(+) biosynthesis; nicotinate D-ribonucleotide from quinolinate: step 1/1. Its function is as follows. Involved in the catabolism of quinolinic acid (QA). The polypeptide is Probable nicotinate-nucleotide pyrophosphorylase [carboxylating] (nadC) (Helicobacter pylori (strain ATCC 700392 / 26695) (Campylobacter pylori)).